Reading from the N-terminus, the 226-residue chain is UPF0177 protein YbdJ (226 aa).

5 helical membrane-spanning segments follow: residues 16–36 (LLLL…LGIF), 43–63 (FAFN…IVIA), 81–101 (LLFI…AHHL), 169–189 (FAWV…ISLV), and 206–226 (LHSS…FWVF).

The protein belongs to the UPF0177 family.

It is found in the cell membrane. This is UPF0177 protein YbdJ (ybdJ) from Lactococcus lactis subsp. lactis (strain IL1403) (Streptococcus lactis).